Reading from the N-terminus, the 656-residue chain is Histidine decarboxylase (656 aa).

Substrate is bound by residues Tyr84 and His197. The residue at position 308 (Lys308) is an N6-(pyridoxal phosphate)lysine. Ser343 and Ser362 each carry phosphoserine; by PKA. The segment at 481 to 502 is disordered; that stretch reads HCTSQPSPRAKNLIPPPVTRDS.

This sequence belongs to the group II decarboxylase family. In terms of assembly, homodimer. Pyridoxal 5'-phosphate is required as a cofactor. May be post-translationally processed. In terms of tissue distribution, brain, glandular regions of the stomach, mast cells and fetal liver.

It catalyses the reaction L-histidine + H(+) = histamine + CO2. It participates in amine and polyamine biosynthesis; histamine biosynthesis; histamine from L-histidine: step 1/1. Its activity is regulated as follows. Phosphorylation of brain HDC by cAMP-dependent protein kinase leads to enzyme inactivation. In terms of biological role, catalyzes the biosynthesis of histamine from histidine. In Rattus norvegicus (Rat), this protein is Histidine decarboxylase (Hdc).